The primary structure comprises 280 residues: Protein scylla (280 aa).

Residues 39-96 (LMSKKAKTTTGGSSNGSNATATSTTTSTSSSIKHKQPAGSSNNNVGQSQSKKTKPSGS) form a disordered region. 2 stretches are compositionally biased toward low complexity: residues 46-69 (TTTGGSSNGSNATATSTTTSTSSS) and 77-96 (GSSNNNVGQSQSKKTKPSGS).

Belongs to the DDIT4 family.

Its subcellular location is the cytoplasm. In terms of biological role, inhibits cell growth by regulating the Tor pathway upstream of the Tsc1-Tsc2 complex and downstream of Akt1. Acts as a cell death activator during head development. In Drosophila melanogaster (Fruit fly), this protein is Protein scylla (scyl).